Consider the following 350-residue polypeptide: UDP-3-O-acylglucosamine N-acyltransferase (350 aa).

H251 serves as the catalytic Proton acceptor.

It belongs to the transferase hexapeptide repeat family. LpxD subfamily. As to quaternary structure, homotrimer.

It carries out the reaction a UDP-3-O-[(3R)-3-hydroxyacyl]-alpha-D-glucosamine + a (3R)-hydroxyacyl-[ACP] = a UDP-2-N,3-O-bis[(3R)-3-hydroxyacyl]-alpha-D-glucosamine + holo-[ACP] + H(+). The protein operates within bacterial outer membrane biogenesis; LPS lipid A biosynthesis. Its function is as follows. Catalyzes the N-acylation of UDP-3-O-acylglucosamine using 3-hydroxyacyl-ACP as the acyl donor. Is involved in the biosynthesis of lipid A, a phosphorylated glycolipid that anchors the lipopolysaccharide to the outer membrane of the cell. The sequence is that of UDP-3-O-acylglucosamine N-acyltransferase from Prochlorococcus marinus (strain NATL2A).